Here is a 127-residue protein sequence, read N- to C-terminus: Glycine cleavage system H protein (127 aa).

The 83-residue stretch at E22–E104 folds into the Lipoyl-binding domain. An N6-lipoyllysine modification is found at K63.

It belongs to the GcvH family. The glycine cleavage system is composed of four proteins: P, T, L and H. It depends on (R)-lipoate as a cofactor.

In terms of biological role, the glycine cleavage system catalyzes the degradation of glycine. The H protein shuttles the methylamine group of glycine from the P protein to the T protein. Functionally, is also involved in protein lipoylation via its role as an octanoyl/lipoyl carrier protein intermediate. This chain is Glycine cleavage system H protein, found in Bacillus cereus (strain ZK / E33L).